The chain runs to 125 residues: UPF0102 protein CCNA_00142 (125 aa).

This sequence belongs to the UPF0102 family.

The chain is UPF0102 protein CCNA_00142 from Caulobacter vibrioides (strain NA1000 / CB15N) (Caulobacter crescentus).